The chain runs to 65 residues: Large ribosomal subunit protein bL33c (65 aa).

This sequence belongs to the bacterial ribosomal protein bL33 family.

It is found in the plastid. The protein localises to the chloroplast. This is Large ribosomal subunit protein bL33c from Gracilaria tenuistipitata var. liui (Red alga).